The following is a 38-amino-acid chain: FTCAISCDIKVNGKPCKGSGEKKCSGGWSCKFNVCVKV.

3 disulfides stabilise this stretch: Cys-3-Cys-24, Cys-7-Cys-30, and Cys-16-Cys-35.

As to expression, expressed by the venom gland.

The protein localises to the secreted. Has strong antifungal activity against C.albicans MDM8, C.krusei IOC 4559 (MIC=2.5-5 uM), C.glabrata IOC 45658 (MIC=2.5-5 uM), C.albicans IOC 45588 (MIC=2.5-5 uM), C.parapsilosis IOC 456416 (MIC=2.5-5 uM), C.tropicalis IOC 45608 (MIC=2.5-5 uM), C.guilliermondii IOC 455716 (MIC=2.5-5 uM) and A.niger (MIC=5-10 uM). Lacks antifungal activity against B.bassiana. Has no antibacterial effect against Gram-positive bacteria M.luteus, S.epidermidis, S.aureus or against Gram-negative bacteria E.coli and P.aeruginosa. Has no hemolytic activity against human erythrocytes. Probable ion channel inhibitor. The sequence is that of U-theraphotoxin-Aju1a from Avicularia juruensis (Yellow-banded pinktoe).